Consider the following 690-residue polypeptide: Exonuclease GOR (690 aa).

Disordered regions lie at residues 136–162 (TRVA…NRSG) and 567–690 (QPRH…SLHH). The segment covering 585–595 (APSTTAISPES) has biased composition (polar residues). Basic and acidic residues predominate over residues 605–614 (KETGAVDGRR). Positions 612 to 626 (GRRGQKAKSNPNRPL) are GOR14-1 epitope. Residues 631–646 (NPCRGPSGLSPSLCPS) show a composition bias toward low complexity. A compositionally biased stretch (pro residues) spans 661 to 682 (PPLPVPRVPAAPPRACPHPSAH).

This sequence belongs to the REXO1/REXO3 family.

Its subcellular location is the cytoplasm. The protein resides in the nucleus. This Pan troglodytes (Chimpanzee) protein is Exonuclease GOR (REXO1L1).